Here is a 624-residue protein sequence, read N- to C-terminus: Chaperone protein HtpG (624 aa).

The a; substrate-binding stretch occupies residues 1 to 336 (MKGQETRGFQ…SSDLPLNVSR (336 aa)). The interval 337-552 (EILQDSTVTR…ADEMSTQMAK (216 aa)) is b. The tract at residues 553–624 (LFAAAGQKVP…IRRMNQLLVS (72 aa)) is c.

The protein belongs to the heat shock protein 90 family. Homodimer.

It localises to the cytoplasm. Its function is as follows. Molecular chaperone. Has ATPase activity. The chain is Chaperone protein HtpG from Shigella flexneri.